Consider the following 199-residue polypeptide: Replication protein (199 aa).

The protein belongs to the Gram-positive plasmids replication protein type 2 family.

Functionally, is essential for plasmid replication. Nicks the positive strand at the plus origin of replication. The polypeptide is Replication protein (repF) (Staphylococcus aureus).